Reading from the N-terminus, the 69-residue chain is Fumarase D (69 aa).

This sequence belongs to the FumD family.

It carries out the reaction (S)-malate = fumarate + H2O. Its function is as follows. In vitro catalyzes the addition of water to fumarate, forming malate. Cannot catalyze the reverse reaction. Cannot use the cis-isomer maleate as substrate. This Shigella flexneri protein is Fumarase D.